A 326-amino-acid polypeptide reads, in one-letter code: Structural protein ORF326a (326 aa).

The disordered stretch occupies residues 1-28 (MSTTFRGKKEEEEEEEEEKEEKEEELFN). The segment covering 11 to 26 (EEEEEEEEKEEKEEEL) has biased composition (acidic residues).

It localises to the virion. In Acidianus two-tailed virus (ATV), this protein is Structural protein ORF326a.